The primary structure comprises 430 residues: 2-deoxy-scyllo-inosose synthase (430 aa).

NAD(+) is bound by residues aspartate 42, 73 to 76 (EVHK), 105 to 109 (GVTGN), 129 to 130 (TT), 140 to 142 (SLK), and 151 to 152 (KN). The active site involves lysine 142. Glutamate 184 provides a ligand contact to Co(2+). The active site involves glutamate 244. The Co(2+) site is built by histidine 247 and histidine 263. Positions 371–430 (RGGAGGGAAEPAAARTGPVPDGPEAAVPATPGPVPAGPAAAAPLPSGPAPTAPAAAGPVP) are disordered. Low complexity predominate over residues 379-399 (AEPAAARTGPVPDGPEAAVPA).

This sequence belongs to the sugar phosphate cyclases superfamily. DOI synthase family. NAD(+) is required as a cofactor. The cofactor is Co(2+).

The enzyme catalyses D-glucose 6-phosphate = 2-deoxy-L-scyllo-inosose + phosphate. It participates in metabolic intermediate biosynthesis; 2-deoxystreptamine biosynthesis; 2-deoxystreptamine from D-glucose 6-phosphate: step 1/4. The protein operates within antibiotic biosynthesis; neomycin biosynthesis. Catalyzes the intramolecular carbocycle formation from D-glucose-6-phosphate to 2-deoxy-scyllo-inosose (DOI). This is 2-deoxy-scyllo-inosose synthase (neoC) from Streptomyces fradiae (Streptomyces roseoflavus).